A 173-amino-acid polypeptide reads, in one-letter code: HAM34 protein (173 aa).

Over residues 22–89 (AAPATTPDTA…ADGTQTATAP (68 aa)) the composition is skewed to low complexity. Positions 22–155 (AAPATTPDTA…ATDTTSGASH (134 aa)) are disordered. Residues 95–133 (TEESSASGEMTPTVGTDTSDQVSDSTAAGPSTPEGSMTG) show a composition bias toward polar residues. Residues 134-155 (TSTPKASDSSSSATDTTSGASH) show a composition bias toward low complexity.

As to expression, germinating spores.

Could be a structural protein required for the infection process of B.lactucae. In Bremia lactucae (Lettuce downy mildew), this protein is HAM34 protein (HAM34).